A 381-amino-acid polypeptide reads, in one-letter code: Cobalt-precorrin-5B C(1)-methyltransferase (381 aa).

It belongs to the CbiD family.

The catalysed reaction is Co-precorrin-5B + S-adenosyl-L-methionine = Co-precorrin-6A + S-adenosyl-L-homocysteine. Its pathway is cofactor biosynthesis; adenosylcobalamin biosynthesis; cob(II)yrinate a,c-diamide from sirohydrochlorin (anaerobic route): step 6/10. Catalyzes the methylation of C-1 in cobalt-precorrin-5B to form cobalt-precorrin-6A. The sequence is that of Cobalt-precorrin-5B C(1)-methyltransferase from Methylococcus capsulatus (strain ATCC 33009 / NCIMB 11132 / Bath).